A 773-amino-acid polypeptide reads, in one-letter code: ATP-dependent permease MDL2, mitochondrial (773 aa).

The transit peptide at 1–90 (MLNGRLPLLR…SPISKGSARS (90 aa)) directs the protein to the mitochondrion. Polar residues predominate over residues 73 to 84 (PETSLPSASPIS). The segment at 73–95 (PETSLPSASPISKGSARSAHAKE) is disordered. Positions 119–413 (LLTAILLLTI…LSTFYSEIMQ (295 aa)) constitute an ABC transmembrane type-1 domain. 3 helical membrane-spanning segments follow: residues 123-143 (ILLLTISCSIGMSIPKVIGIV), 170-192 (FLSFFTVALLIGCAANFGRFILL), and 257-277 (VVGVGMMCSLSPQLSILLLFF). Position 481 to 488 (481 to 488 (GPSGRGKS)) interacts with ATP. An ABC transporter domain is found at 493 to 733 (LLLRYYNPTT…DDNDNNHDND (241 aa)). Basic and acidic residues-rich tracts occupy residues 706 to 733 (KEDLNESKEHDDQKKDDNDDNDNNHDND) and 740 to 762 (ETKDNNSDDIEKSVEHLLKDAAK). Residues 706–773 (KEDLNESKEH…ANPIKITPQP (68 aa)) form a disordered region.

The protein belongs to the ABC transporter superfamily. ABCB family. Mitochondrial peptide exporter (TC 3.A.1.212) subfamily.

It is found in the mitochondrion inner membrane. In Saccharomyces cerevisiae (strain ATCC 204508 / S288c) (Baker's yeast), this protein is ATP-dependent permease MDL2, mitochondrial (MDL2).